Reading from the N-terminus, the 319-residue chain is Acetyl-coenzyme A carboxylase carboxyl transferase subunit alpha (319 aa).

In terms of domain architecture, CoA carboxyltransferase C-terminal spans Asn-35 to Asp-296.

The protein belongs to the AccA family. Acetyl-CoA carboxylase is a heterohexamer composed of biotin carboxyl carrier protein (AccB), biotin carboxylase (AccC) and two subunits each of ACCase subunit alpha (AccA) and ACCase subunit beta (AccD).

It is found in the cytoplasm. It carries out the reaction N(6)-carboxybiotinyl-L-lysyl-[protein] + acetyl-CoA = N(6)-biotinyl-L-lysyl-[protein] + malonyl-CoA. It participates in lipid metabolism; malonyl-CoA biosynthesis; malonyl-CoA from acetyl-CoA: step 1/1. Functionally, component of the acetyl coenzyme A carboxylase (ACC) complex. First, biotin carboxylase catalyzes the carboxylation of biotin on its carrier protein (BCCP) and then the CO(2) group is transferred by the carboxyltransferase to acetyl-CoA to form malonyl-CoA. This Shigella boydii serotype 4 (strain Sb227) protein is Acetyl-coenzyme A carboxylase carboxyl transferase subunit alpha.